The primary structure comprises 205 residues: Small ribosomal subunit protein uS4 (205 aa).

A disordered region spans residues 1-46; that stretch reads MSKRHSAKYKIDRRMGENLWGRPKSPVNSRSYGPGQHGQRRKSKVS. In terms of domain architecture, S4 RNA-binding spans 94–154; sequence SRLDAIVYRA…EKSRNMALVL (61 aa).

It belongs to the universal ribosomal protein uS4 family. In terms of assembly, part of the 30S ribosomal subunit. Contacts protein S5. The interaction surface between S4 and S5 is involved in control of translational fidelity.

Its function is as follows. One of the primary rRNA binding proteins, it binds directly to 16S rRNA where it nucleates assembly of the body of the 30S subunit. In terms of biological role, with S5 and S12 plays an important role in translational accuracy. This Caulobacter vibrioides (strain ATCC 19089 / CIP 103742 / CB 15) (Caulobacter crescentus) protein is Small ribosomal subunit protein uS4.